The following is a 111-amino-acid chain: MDLENTENVENNNNNEEEVKAKGERKAHFNKELNEKDGRKKFFKKKVCYFCKNNIDVLDYKDIKLLKRYVKDSGKIIPKRLNGTCSKHQRLVTKAIKRARNIALLPYETRY.

Positions 1–32 are disordered; that stretch reads MDLENTENVENNNNNEEEVKAKGERKAHFNKE. The segment covering 17-32 has biased composition (basic and acidic residues); the sequence is EEVKAKGERKAHFNKE.

Belongs to the bacterial ribosomal protein bS18 family. Part of the 30S ribosomal subunit. Forms a tight heterodimer with protein bS6.

Functionally, binds as a heterodimer with protein bS6 to the central domain of the 16S rRNA, where it helps stabilize the platform of the 30S subunit. The chain is Small ribosomal subunit protein bS18 from Brachyspira hyodysenteriae (strain ATCC 49526 / WA1).